Consider the following 332-residue polypeptide: Ribose-phosphate pyrophosphokinase (332 aa).

Residue 57–59 coordinates ATP; that stretch reads DGE. Positions 150 and 189 each coordinate Mg(2+). Lys213 is an active-site residue. Residues Arg215, Asp239, and 243 to 247 contribute to the D-ribose 5-phosphate site; that span reads DTAGT.

Belongs to the ribose-phosphate pyrophosphokinase family. Class I subfamily. In terms of assembly, homohexamer. Requires Mg(2+) as cofactor.

Its subcellular location is the cytoplasm. The catalysed reaction is D-ribose 5-phosphate + ATP = 5-phospho-alpha-D-ribose 1-diphosphate + AMP + H(+). It participates in metabolic intermediate biosynthesis; 5-phospho-alpha-D-ribose 1-diphosphate biosynthesis; 5-phospho-alpha-D-ribose 1-diphosphate from D-ribose 5-phosphate (route I): step 1/1. Its function is as follows. Involved in the biosynthesis of the central metabolite phospho-alpha-D-ribosyl-1-pyrophosphate (PRPP) via the transfer of pyrophosphoryl group from ATP to 1-hydroxyl of ribose-5-phosphate (Rib-5-P). The chain is Ribose-phosphate pyrophosphokinase from Gloeobacter violaceus (strain ATCC 29082 / PCC 7421).